A 345-amino-acid polypeptide reads, in one-letter code: Neurotrimin (345 aa).

A signal peptide spans 1 to 30 (MGVCGSLFLPWKCLVVVSLRLLFLVPTGVP). Ig-like C2-type domains follow at residues 39-126 (PKAM…PKTS), 136-218 (PKIV…VKVT), and 222-309 (PPYI…ASIT). Asn44, Asn70, and Asn152 each carry an N-linked (GlcNAc...) asparagine glycan. Residues Cys57 and Cys115 are joined by a disulfide bond. 2 disulfide bridges follow: Cys157/Cys201 and Cys243/Cys295. N-linked (GlcNAc...) asparagine glycans are attached at residues Asn284, Asn292, Asn305, and Asn321. Asn321 carries the GPI-anchor amidated asparagine lipid modification. Positions 322–345 (GTSSRRAGCLWLLPLLVLHLLLKF) are cleaved as a propeptide — removed in mature form.

It belongs to the immunoglobulin superfamily. IgLON family.

It localises to the cell membrane. Its function is as follows. Neural cell adhesion molecule. This is Neurotrimin (NTM) from Bos taurus (Bovine).